The sequence spans 247 residues: Flagellin B1 (247 aa).

A propeptide spanning residues 1-20 (MNKLLRKVRKAFSLKADNKA) is cleaved from the precursor.

This sequence belongs to the archaeal flagellin family. Glycosylated.

It localises to the archaeal flagellum. Functionally, flagellin is the subunit protein which polymerizes to form the filaments of archaeal flagella. In Thermoplasma volcanium (strain ATCC 51530 / DSM 4299 / JCM 9571 / NBRC 15438 / GSS1), this protein is Flagellin B1.